The primary structure comprises 104 residues: Matrix Gla protein (104 aa).

The N-terminal stretch at 1-19 (MKSLLPLAILAALAVATLC) is a signal peptide. Glu-21 bears the 4-carboxyglutamate mark. Phosphoserine is present on residues Ser-22, Ser-25, and Ser-28. Positions 51–97 (RAKAQKRVQERNKPAYEINREACDDYKLCERYAMVYGYNAAYNRYFR) constitute a Gla domain. A 4-carboxyglutamate mark is found at Glu-60, Glu-67, and Glu-71. Cys-73 and Cys-79 are oxidised to a cystine.

It belongs to the osteocalcin/matrix Gla protein family. Post-translationally, requires vitamin K-dependent gamma-carboxylation for its function.

It localises to the secreted. In terms of biological role, associates with the organic matrix of bone and cartilage. Thought to act as an inhibitor of bone formation. The protein is Matrix Gla protein (Mgp) of Mus musculus (Mouse).